The chain runs to 303 residues: Protein transport protein SEC13-2 (303 aa).

WD repeat units lie at residues 7 to 46 (AHEG…NSSS), 53 to 95 (GHEG…GKMQ), 102 to 143 (VHSA…IAST), 149 to 202 (AHKF…ETYV), 209 to 251 (GHKD…KKND), and 261 to 300 (KFEQ…KWEE).

The protein belongs to the WD repeat SEC13 family. The COPII coat is composed of at least 5 proteins: the SEC23/24 complex, the SEC13/31 complex, and the protein SAR1. Component of the nuclear pore complex (NPC). NPC constitutes the exclusive means of nucleocytoplasmic transport. NPCs allow the passive diffusion of ions and small molecules and the active, nuclear transport receptor-mediated bidirectional transport of macromolecules such as proteins, RNAs, ribonucleoparticles (RNPs), and ribosomal subunits across the nuclear envelope. Due to its 8-fold rotational symmetry, all subunits are present with 8 copies or multiples thereof.

The protein resides in the cytoplasmic vesicle. It localises to the COPII-coated vesicle membrane. Its subcellular location is the endoplasmic reticulum membrane. It is found in the nucleus. The protein localises to the nuclear pore complex. Component of the coat protein complex II (COPII) which promotes the formation of transport vesicles from the endoplasmic reticulum (ER). The coat has two main functions, the physical deformation of the endoplasmic reticulum membrane into vesicles and the selection of cargo molecules. It also functions as a component of the nuclear pore complex (NPC). NPC components, collectively referred to as nucleoporins (NUPs), can play the role of both NPC structural components and of docking or interaction partners for transiently associated nuclear transport factors. SEC13 is required for efficient mRNA export from the nucleus to the cytoplasm and for correct nuclear pore biogenesis and distribution. The polypeptide is Protein transport protein SEC13-2 (SEC132) (Candida glabrata (strain ATCC 2001 / BCRC 20586 / JCM 3761 / NBRC 0622 / NRRL Y-65 / CBS 138) (Yeast)).